The sequence spans 353 residues: MTIALGRVTKEENDLFDIMDDWLRRDRFVFVGWSGLLLFPCAYFALGGWFTGTTFVTSWYTHGLASSYLEGCNFLTAAVSTPANSLAHSLLLLWGPEAQGDFTRWCQLGGLWTFVALHGAFALIGFMLRQFELARSVQLRPYNAISFSGPIAVFVSVFLIYPLGQSGWFFAPSFGVAAIFRFILFFQGFHNWTLNPFHMMGVAGVLGAALLCAIHGATVENTLFEDGDGANTFRAFNPTQAEETYSMVTANRFWSQIFGVAFSNKRWLHFFMLFVPVTGLWMSAIGVVGLALNLRAYDFVSQEIRAAEDPEFETFYTKNILLNEGIRAWMAAQDQPHENLIFPEEVLPRGNAL.

At Thr-2 the chain carries N-acetylthreonine. Thr-2 is subject to Phosphothreonine. The helical transmembrane segment at 41–61 (CAYFALGGWFTGTTFVTSWYT) threads the bilayer. His-118 is a binding site for chlorophyll a. Residues 125-141 (GFMLRQFELARSVQLRP) traverse the membrane as a helical segment. Gln-130 and Asn-143 together coordinate pheophytin a. Residues 153 to 166 (VFVSVFLIYPLGQS) traverse the membrane as a helical segment. His-198 contributes to the chlorophyll a binding site. A helical transmembrane segment spans residues 208–228 (AALLCAIHGATVENTLFEDGD). His-215 and Phe-262 together coordinate a plastoquinone. A Fe cation-binding site is contributed by His-215. His-269 contributes to the Fe cation binding site. A helical transmembrane segment spans residues 279-295 (GLWMSAIGVVGLALNLR).

The protein belongs to the reaction center PufL/M/PsbA/D family. As to quaternary structure, PSII is composed of 1 copy each of membrane proteins PsbA, PsbB, PsbC, PsbD, PsbE, PsbF, PsbH, PsbI, PsbJ, PsbK, PsbL, PsbM, PsbT, PsbX, PsbY, PsbZ, Psb30/Ycf12, at least 3 peripheral proteins of the oxygen-evolving complex and a large number of cofactors. It forms dimeric complexes. The cofactor is The D1/D2 heterodimer binds P680, chlorophylls that are the primary electron donor of PSII, and subsequent electron acceptors. It shares a non-heme iron and each subunit binds pheophytin, quinone, additional chlorophylls, carotenoids and lipids. There is also a Cl(-1) ion associated with D1 and D2, which is required for oxygen evolution. The PSII complex binds additional chlorophylls, carotenoids and specific lipids..

Its subcellular location is the plastid. The protein localises to the chloroplast thylakoid membrane. It carries out the reaction 2 a plastoquinone + 4 hnu + 2 H2O = 2 a plastoquinol + O2. In terms of biological role, photosystem II (PSII) is a light-driven water:plastoquinone oxidoreductase that uses light energy to abstract electrons from H(2)O, generating O(2) and a proton gradient subsequently used for ATP formation. It consists of a core antenna complex that captures photons, and an electron transfer chain that converts photonic excitation into a charge separation. The D1/D2 (PsbA/PsbD) reaction center heterodimer binds P680, the primary electron donor of PSII as well as several subsequent electron acceptors. D2 is needed for assembly of a stable PSII complex. The protein is Photosystem II D2 protein of Oryza nivara (Indian wild rice).